We begin with the raw amino-acid sequence, 476 residues long: Cytochrome c oxidase subunit 1 (476 aa).

The helical transmembrane segment at 19 to 39 threads the bilayer; it reads LYYLWFSFLFGIYGFLLSVIL. A Ca(2+)-binding site is contributed by E42. The next 8 membrane-spanning stretches (helical) occupy residues 61 to 81, 105 to 125, 144 to 164, 194 to 214, 240 to 260, 278 to 298, 309 to 329, and 345 to 365; these read MIFTVHGIIMIFFNIMPGLFG, ISLLLQPIAFILVILSTAAEF, LSPVAVDVIVIGLLVSGIASI, LIITSIMLLLTLPVLTGGVLM, LLWFFGHPEVYILILPAFGII, MILAMGCIAVLGSVVWVHHMY, FFTSTTILISIPTGTKVFNWL, and LLSLLFICTFTFGGTTGVILG. Residue H66 coordinates Fe(II)-heme a. H246 lines the Cu cation pocket. The 1'-histidyl-3'-tyrosine (His-Tyr) cross-link spans 246–250; it reads HPEVY. Y250 is a binding site for O2. Positions 295 and 296 each coordinate Cu cation. H374 and D375 together coordinate Mg(2+). 2 helical membrane-spanning segments follow: residues 379–399 and 415–435; these read VIAHFHFVLSIGAIIALFTSV and TIIVLWSILFFVGVVLTFLPM. H382 serves as a coordination point for heme a3. H384 is a Fe(II)-heme a binding site. P448 contacts Ca(2+). A helical membrane pass occupies residues 455–475; the sequence is NGWNMICSIGSTMTLFGLLIF.

Belongs to the heme-copper respiratory oxidase family. Component of the cytochrome c oxidase (complex IV, CIV), a multisubunit enzyme composed of a catalytic core of 3 subunits and several supernumerary subunits. The complex exists as a monomer or a dimer and forms supercomplexes (SCs) in the inner mitochondrial membrane with ubiquinol-cytochrome c oxidoreductase (cytochrome b-c1 complex, complex III, CIII). Requires heme as cofactor. It depends on Cu cation as a cofactor.

It is found in the mitochondrion inner membrane. The enzyme catalyses 4 Fe(II)-[cytochrome c] + O2 + 8 H(+)(in) = 4 Fe(III)-[cytochrome c] + 2 H2O + 4 H(+)(out). Its pathway is energy metabolism; oxidative phosphorylation. Functionally, component of the cytochrome c oxidase, the last enzyme in the mitochondrial electron transport chain which drives oxidative phosphorylation. The respiratory chain contains 3 multisubunit complexes succinate dehydrogenase (complex II, CII), ubiquinol-cytochrome c oxidoreductase (cytochrome b-c1 complex, complex III, CIII) and cytochrome c oxidase (complex IV, CIV), that cooperate to transfer electrons derived from NADH and succinate to molecular oxygen, creating an electrochemical gradient over the inner membrane that drives transmembrane transport and the ATP synthase. Cytochrome c oxidase is the component of the respiratory chain that catalyzes the reduction of oxygen to water. Electrons originating from reduced cytochrome c in the intermembrane space (IMS) are transferred via the dinuclear copper A center (CU(A)) of subunit 2 and heme A of subunit 1 to the active site in subunit 1, a binuclear center (BNC) formed by heme A3 and copper B (CU(B)). The BNC reduces molecular oxygen to 2 water molecules using 4 electrons from cytochrome c in the IMS and 4 protons from the mitochondrial matrix. This Plasmodium chabaudi protein is Cytochrome c oxidase subunit 1 (COI).